A 476-amino-acid chain; its full sequence is ATP synthase subunit beta (476 aa).

G161–T168 contributes to the ATP binding site.

The protein belongs to the ATPase alpha/beta chains family. As to quaternary structure, F-type ATPases have 2 components, CF(1) - the catalytic core - and CF(0) - the membrane proton channel. CF(1) has five subunits: alpha(3), beta(3), gamma(1), delta(1), epsilon(1). CF(0) has three main subunits: a(1), b(2) and c(9-12). The alpha and beta chains form an alternating ring which encloses part of the gamma chain. CF(1) is attached to CF(0) by a central stalk formed by the gamma and epsilon chains, while a peripheral stalk is formed by the delta and b chains.

It localises to the cell membrane. It carries out the reaction ATP + H2O + 4 H(+)(in) = ADP + phosphate + 5 H(+)(out). Its function is as follows. Produces ATP from ADP in the presence of a proton gradient across the membrane. The catalytic sites are hosted primarily by the beta subunits. This is ATP synthase subunit beta from Mycolicibacterium gilvum (strain PYR-GCK) (Mycobacterium gilvum (strain PYR-GCK)).